The sequence spans 689 residues: Beta-adrenergic receptor kinase 1 (689 aa).

Positions 1–190 (MADLEAVLAD…ELNIHLTMND (190 aa)) are N-terminal. Positions 54–175 (TFEKIFSQKL…IESDKFTRFC (122 aa)) constitute an RGS domain. A Protein kinase domain is found at 191–453 (FSVHRIIGRG…AQEVKESPFF (263 aa)). Residues 197–205 (IGRGGFGEV) and K220 contribute to the ATP site. D317 acts as the Proton acceptor in catalysis. The AGC-kinase C-terminal domain maps to 454–521 (RSLDWQMVFL…TISERWQQEV (68 aa)). In terms of domain architecture, PH spans 558–652 (DCIMHGYMSK…WKKELRDAYR (95 aa)). Phosphoserine is present on S670.

The protein belongs to the protein kinase superfamily. AGC Ser/Thr protein kinase family. GPRK subfamily. Interacts with the heterodimer formed by GNB1 and GNG2. Interacts with GIT1. Interacts with, and phosphorylates chemokine-stimulated CCR5. Interacts with ARRB1. Interacts with LPAR1 and LPAR2. Interacts with RALA in response to LPAR1 activation. ADRBK1 and RALA mutually inhibit each other's binding to LPAR1. Interacts with ADRB2.

It localises to the cytoplasm. The protein localises to the cell membrane. Its subcellular location is the postsynapse. It is found in the presynapse. The catalysed reaction is [beta-adrenergic receptor] + ATP = [beta-adrenergic receptor]-phosphate + ADP + H(+). Its activity is regulated as follows. In contrast to other AGC family kinases, the catalytic activity is solely regulated by the binding of substrates and ligands, not by phosphorylation of the kinase domain. In terms of biological role, specifically phosphorylates the agonist-occupied form of the beta-adrenergic and closely related receptors, probably inducing a desensitization of them. Key regulator of LPAR1 signaling. Competes with RALA for binding to LPAR1 thus affecting the signaling properties of the receptor. Desensitizes LPAR1 and LPAR2 in a phosphorylation-independent manner. Positively regulates ciliary smoothened (SMO)-dependent Hedgehog (Hh) signaling pathway by facilitating the trafficking of SMO into the cilium and the stimulation of SMO activity. Inhibits relaxation of airway smooth muscle in response to blue light. The sequence is that of Beta-adrenergic receptor kinase 1 from Mesocricetus auratus (Golden hamster).